A 66-amino-acid chain; its full sequence is Large ribosomal subunit protein bL35 (66 aa).

The segment covering 1-16 has biased composition (basic residues); it reads MPKQKTHRASAKRFKR. Residues 1-21 form a disordered region; the sequence is MPKQKTHRASAKRFKRTGNGG.

The protein belongs to the bacterial ribosomal protein bL35 family.

This chain is Large ribosomal subunit protein bL35, found in Lactococcus lactis subsp. cremoris (strain MG1363).